Here is a 615-residue protein sequence, read N- to C-terminus: Matrix metalloproteinase-25 (615 aa).

The propeptide occupies 1–162; the sequence is MCFPGSQISP…AAGLVRRRRR (162 aa). Residues 53–73 form a helical membrane-spanning segment; that stretch reads ILRLPAFGLPLLALLLVPLLP. A Cysteine switch motif is present at residues 143–150; the sequence is PRCSLPDV. C145 and H287 together coordinate Zn(2+). Residue E288 is part of the active site. 2 residues coordinate Zn(2+): H291 and H297. The disordered stretch occupies residues 336–366; the sequence is VSQNPNARPTRKPLVPPPQPPAMPPDSPATP. Residues 349–366 are compositionally biased toward pro residues; it reads LVPPPQPPAMPPDSPATP. Hemopexin repeat units lie at residues 368–417, 421–466, 467–515, and 516–562; these read PDRC…WEGL, VKVI…GLPP, GEDV…DGAP, and FAPD…WLDC. C371 and C562 are oxidised to a cystine. The interval 547 to 582 is disordered; sequence AESDSPQPIGPKWLDCPAPNSDPRVTSPPKTTSKTR. A593 carries the GPI-anchor amidated alanine lipid modification. A propeptide spans 594–615 (removed in mature form); the sequence is SEQLSPLLLPLLPLVAGEVFSY.

It belongs to the peptidase M10A family. It depends on Zn(2+) as a cofactor. The cofactor is Ca(2+). In terms of processing, the precursor is cleaved by a furin endopeptidase.

Its subcellular location is the cell membrane. Functionally, may activate progelatinase A. This is Matrix metalloproteinase-25 (Mmp25) from Mus musculus (Mouse).